We begin with the raw amino-acid sequence, 753 residues long: Probable dipeptidyl peptidase 4 (753 aa).

An N-terminal signal peptide occupies residues 1-18 (MKTSQFLSLLLLAGIAQA). N-linked (GlcNAc...) asparagine glycans are attached at residues Asn-84, Asn-114, and Asn-222. Residues Ser-616, Asp-668, and His-703 each act as charge relay system in the active site.

The protein belongs to the peptidase S9B family.

Its subcellular location is the secreted. The enzyme catalyses Release of an N-terminal dipeptide, Xaa-Yaa-|-Zaa-, from a polypeptide, preferentially when Yaa is Pro, provided Zaa is neither Pro nor hydroxyproline.. Functionally, extracellular dipeptidyl-peptidase which removes N-terminal dipeptides sequentially from polypeptides having unsubstituted N-termini provided that the penultimate residue is proline. Contributes to pathogenicity. The chain is Probable dipeptidyl peptidase 4 (DPP4) from Trichophyton verrucosum (strain HKI 0517).